The following is a 313-amino-acid chain: Hsp90 co-chaperone Cdc37-like 1 (313 aa).

The protein belongs to the CDC37 family. As to quaternary structure, forms complexes with Hsp70 and Hsp90.

Its subcellular location is the cytoplasm. Its function is as follows. Co-chaperone that binds to numerous proteins and promotes their interaction with Hsp70 and Hsp90. The protein is Hsp90 co-chaperone Cdc37-like 1 (cdc37l1) of Danio rerio (Zebrafish).